Reading from the N-terminus, the 653-residue chain is 1-deoxy-D-xylulose-5-phosphate synthase (653 aa).

Thiamine diphosphate-binding positions include His86 and 127-129; that span reads GHS. Mg(2+) is bound at residue Asp158. Thiamine diphosphate contacts are provided by residues 159–160, Asn187, and Phe294; that span reads GA. Asn187 contacts Mg(2+). The segment covering 309-324 has biased composition (basic and acidic residues); sequence KLEKTTSEPPPKKEPR. The segment at 309 to 343 is disordered; the sequence is KLEKTTSEPPPKKEPRSPNAATAEPEAQPKPQPKP. Glu395 serves as a coordination point for thiamine diphosphate.

This sequence belongs to the transketolase family. DXPS subfamily. As to quaternary structure, homodimer. Mg(2+) is required as a cofactor. It depends on thiamine diphosphate as a cofactor.

It carries out the reaction D-glyceraldehyde 3-phosphate + pyruvate + H(+) = 1-deoxy-D-xylulose 5-phosphate + CO2. It functions in the pathway metabolic intermediate biosynthesis; 1-deoxy-D-xylulose 5-phosphate biosynthesis; 1-deoxy-D-xylulose 5-phosphate from D-glyceraldehyde 3-phosphate and pyruvate: step 1/1. In terms of biological role, catalyzes the acyloin condensation reaction between C atoms 2 and 3 of pyruvate and glyceraldehyde 3-phosphate to yield 1-deoxy-D-xylulose-5-phosphate (DXP). The sequence is that of 1-deoxy-D-xylulose-5-phosphate synthase from Chromohalobacter salexigens (strain ATCC BAA-138 / DSM 3043 / CIP 106854 / NCIMB 13768 / 1H11).